Here is a 144-residue protein sequence, read N- to C-terminus: Probable nucleoside diphosphate kinase 5 (144 aa).

Residues Lys-3, Phe-51, Arg-79, Thr-85, Arg-99, and Asn-109 each coordinate ATP. His-112 acts as the Pros-phosphohistidine intermediate in catalysis.

The protein belongs to the NDK family.

The enzyme catalyses a 2'-deoxyribonucleoside 5'-diphosphate + ATP = a 2'-deoxyribonucleoside 5'-triphosphate + ADP. It catalyses the reaction a ribonucleoside 5'-diphosphate + ATP = a ribonucleoside 5'-triphosphate + ADP. Its function is as follows. Involved in the synthesis of nucleoside triphosphates other than ATP. The ATP gamma phosphate is transferred to the NDP beta phosphate via a ping-pong mechanism, using a phosphorylated active-site intermediate. This Arabidopsis thaliana (Mouse-ear cress) protein is Probable nucleoside diphosphate kinase 5.